A 945-amino-acid chain; its full sequence is MLDKYSPAEIESKHYQNWESQGYFRPDMDLTKPSFSIQLPPPNVTGTLHMGHAFNQTIMDGLTRYYRMKGCNTAWIPGTDHAGIATQIVVERQLAAQNVSRHDLGREKFLEKVWEWKEVSGGTITQQMRRVGCSADWTREYFTMDGVRAETVTEVFVRLYEQGLIYRGKRLVNWDPVLGTAVSDLEVESMEEQGSMWHIRYPLADNPTEAVIVATTRPETLLGDAAVAVNPEDERYTHLIGKELILPLTGRTIPVIADEYVEKDFGTGCVKITPAHDFNDYEVGKRHDTRLINVFDLEAKVLANAEVFNFKGEAQPGFSLPEKYAGLDRFAARKQMVADLQEQGFLVEIKPHTLMTPKGDRTGSVIEPMLTSQWFVAMSATPNGGEPDNEFKGLSLADKAKKAVDSGAVRFIPENWVNTYNQWMNNIQDWCISRQLWWGHQIPAWYDEAGNVYVARNQAEAEKQAGKTGLTREEDVLDTWFSSALVPFSTLGWPSETDELKAFLPSNVLVTGYEIIFFWVARMIMMTTHFTGKVPFKAVYIHGIVRDHEGKKMSKSEGNVIDPVDLIDGIGLDKLLMKRTTGLRKPETAPKVEEATKKLFPEGIPSMGADALRFTMASYASLGRSVNFDFKRAEGYRNFCNKIWNATNFVLMNTENQDCGYGATAAEPRGHSFPDMWIIGRLNQTIEQVTQAYETYRFDLAAETLYSFVWNDYCDWYLELAKVQLQTGCASRQRATRHTLLRVLEAALRLLHPIIPFITEELWQTVAPMCDAKTADSIMLARFPETDGGEIVQTAFGQMTVLQDLIGAVRNLRGETGIQPNVKAPLFVESADDLADYLKYLPMMTRLTEARQVAALPESGDAPVAVCNGARLMLKVEIDKAAETARLSKEAEKLQKALDKLNAKLSKPGYTEKAPAHLVEKDKADLAELEDKMAKVQNQLAKLKD.

Positions 42-52 (PNVTGTLHMGH) match the 'HIGH' region motif. Positions 552 to 556 (KMSKS) match the 'KMSKS' region motif. Residue Lys555 participates in ATP binding. Positions 879 to 945 (DKAAETARLS…VQNQLAKLKD (67 aa)) form a coiled coil.

The protein belongs to the class-I aminoacyl-tRNA synthetase family. ValS type 1 subfamily. As to quaternary structure, monomer.

The protein localises to the cytoplasm. The enzyme catalyses tRNA(Val) + L-valine + ATP = L-valyl-tRNA(Val) + AMP + diphosphate. Functionally, catalyzes the attachment of valine to tRNA(Val). As ValRS can inadvertently accommodate and process structurally similar amino acids such as threonine, to avoid such errors, it has a 'posttransfer' editing activity that hydrolyzes mischarged Thr-tRNA(Val) in a tRNA-dependent manner. The protein is Valine--tRNA ligase of Neisseria gonorrhoeae (strain ATCC 700825 / FA 1090).